A 366-amino-acid polypeptide reads, in one-letter code: Inhibin alpha chain (366 aa).

The signal sequence occupies residues 1 to 20 (MVIQPSLLLLLLLTLQDVDS). A propeptide spanning residues 21 to 63 (CQGPELVRELVLAKVKALFLDALGPPAMDGEGGGPGIRRLPRR) is cleaved from the precursor. Positions 64-233 (HALGGFMHRT…APSAGERARR (170 aa)) are cleaved as a propeptide — inhibin alpha N-terminal region. N-linked (GlcNAc...) asparagine glycosylation is found at Asn147 and Asn269. 3 disulfides stabilise this stretch: Cys263/Cys328, Cys292/Cys363, and Cys296/Cys365.

The protein belongs to the TGF-beta family. As to quaternary structure, dimeric, linked by one or more disulfide bonds. Activin B is a dimer of alpha and beta-B. Inhibin A is a dimer of alpha and beta-A. Inhibin B is a dimer of alpha and beta-B. Interacts with TGFBR3L; this interaction regulates female fertility. Post-translationally, proteolytic processing yields a number of bioactive forms, consisting either solely of the mature alpha chain, of the most N-terminal propeptide linked through a disulfide bond to the mature alpha chain, or of the entire proprotein. In terms of tissue distribution, mainly expressed in ovary and testis. Alpha- and beta-B-subunits are the predominant forms found in testis. Also found in placenta, pituitary, adrenal gland, bone marrow, kidney, spinal cord and brain.

The protein resides in the secreted. In terms of biological role, inhibins and activins inhibit and activate, respectively, the secretion of follitropin by the pituitary gland. Inhibins/activins are involved in regulating a number of diverse functions such as hypothalamic and pituitary hormone secretion, gonadal hormone secretion, germ cell development and maturation, erythroid differentiation, insulin secretion, nerve cell survival, embryonic axial development or bone growth, depending on their subunit composition. Inhibins appear to oppose the functions of activins. Functionally, inhibin A is a dimer of alpha/INHA and beta-A/INHBA that functions as a feedback regulator in the hypothalamic-pituitary-gonadal (HPG) axis. Inhibits the secretion of FSH from the anterior pituitary gland by acting on pituitary gonadotrope cells. Antagonizes activin A by binding to the proteoglycan, betaglycan, and forming a stable complex with and, thereby, sequestering type II activin receptors while excluding type I receptor. Its function is as follows. Inhibin B is a dimer of alpha and beta-B that plays a crucial role in the regulation of the reproductive system by inhibiting the secretion of follicle-stimulating hormone (FSH) from the anterior pituitary gland. Thereby, maintains reproductive homeostasis in both males and females. Acts as a more potent suppressor of FSH release than inhibin A. Functions as competitive receptor antagonist binding activin type II receptors with high affinity in the presence of the TGF-beta type III coreceptor/TGFBR3L. This chain is Inhibin alpha chain (Inha), found in Rattus norvegicus (Rat).